Here is a 252-residue protein sequence, read N- to C-terminus: Phosphoglycolate phosphatase (252 aa).

Residue aspartate 13 is the Nucleophile of the active site. The Mg(2+) site is built by aspartate 13, aspartate 15, and aspartate 192.

The protein belongs to the HAD-like hydrolase superfamily. CbbY/CbbZ/Gph/YieH family. In terms of assembly, monomer. Mg(2+) is required as a cofactor. It depends on chloride as a cofactor.

It catalyses the reaction 2-phosphoglycolate + H2O = glycolate + phosphate. It functions in the pathway organic acid metabolism; glycolate biosynthesis; glycolate from 2-phosphoglycolate: step 1/1. In terms of biological role, specifically catalyzes the dephosphorylation of 2-phosphoglycolate. Is involved in the dissimilation of the intracellular 2-phosphoglycolate formed during the DNA repair of 3'-phosphoglycolate ends, a major class of DNA lesions induced by oxidative stress. The sequence is that of Phosphoglycolate phosphatase from Salmonella paratyphi A (strain ATCC 9150 / SARB42).